A 601-amino-acid polypeptide reads, in one-letter code: Probable inactive receptor kinase At1g27190 (601 aa).

An N-terminal signal peptide occupies residues 1–24 (MKKIFITLLWLLFISSFLCSSSSA). N-linked (GlcNAc...) asparagine glycosylation is present at N52. 5 LRR repeats span residues 73–95 (RIIS…LKLC), 97–119 (SLQS…ICSW), 122–144 (YLVT…IVEC), 146–169 (FLNA…SRLD), and 170–192 (RLRR…LARF). Residues 221-241 (IIIVAGVLGAVGSLCVGLVIF) form a helical membrane-spanning segment. Residue T298 is modified to Phosphothreonine. Positions 301–586 (FSSGNIDVSS…KNMADKHGVS (286 aa)) constitute a Protein kinase domain. Residues 307–315 (DVSSRTGVS) and K329 each bind ATP. Phosphoserine is present on S383. T399 bears the Phosphothreonine mark. A Phosphotyrosine modification is found at Y476. At S478 the chain carries Phosphoserine. T479 carries the phosphothreonine modification. Residues S483 and S586 each carry the phosphoserine modification.

Belongs to the protein kinase superfamily. Ser/Thr protein kinase family.

The protein resides in the membrane. The chain is Probable inactive receptor kinase At1g27190 from Arabidopsis thaliana (Mouse-ear cress).